Consider the following 272-residue polypeptide: MADAAAPGEDDAAWERAIAAAVKNAPFSAPKTLTLDGAVKSTTGRLPSPSLLGRYPSLEELSVAGARLSSLAGLPRLPALRRLSLPDNRLSGAASLAAVAESCGATLRHLDLGNNRFADVAELAPLAPHGVESLDLYQCPVTKAKGYRDKVFALIPSLKFLDGMDAEGNDCLDSDDEEDEEEDEGEEGEGEGDEEEEEEGGEEGEGDEDDEEEGDEEEDEEEGEEEAEDEEDEAGADEEDESKVANGSKGSSGSAQPNKRKRDSEDDANGDN.

3 LRR repeats span residues Ser57–Pro78, Ala79–Ala100, and Thr106–Ala127. The 46-residue stretch at Cys139 to Glu184 folds into the LRRCT domain. The segment at Gly163–Asn272 is disordered. Acidic residues predominate over residues Met164–Glu241. The segment covering Ser248–Pro257 has biased composition (polar residues).

The protein belongs to the ANP32 family.

In Oryza sativa subsp. japonica (Rice), this protein is Acidic leucine-rich nuclear phosphoprotein 32-related protein 2.